The chain runs to 331 residues: MLSPERLALPDYEYLAQRHVLTYMEDAVCQLLENREDISQYGIARFFTEYFNSVCQGTHILFREFSFVQATPHNRVSFLRAFWRCFRTVGKNGDLLTMKEYHCLLQLLCPDFPLELTQKAARIVLMDDAMDCLMSFSDFLFAFQIQFYYSEFLDSVAAIYEDLLSGKNPNTVIVPTSSSGQHRQRPALGEAGMLEGVEASLFYQCLENLCDRHKYSCPPPALVKEALSNVQRLTFYGFLMALSKHHGINQALGALPDKGDLMHDPAMDEELERLLAQVPGLVNSITASPEASCLPSRTPPRVGSPWRPLHHSRKVDGESDGSTEETDESET.

The required for interaction with PCM1 stretch occupies residues 1-111 (MLSPERLALP…HCLLQLLCPD (111 aa)). Residues 1-225 (MLSPERLALP…SCPPPALVKE (225 aa)) are required for interaction with TPGS1, LRRC49, and TTLL1. The required for interaction with TPGS2 stretch occupies residues 112-331 (FPLELTQKAA…STEETDESET (220 aa)). The segment at 289–331 (PEASCLPSRTPPRVGSPWRPLHHSRKVDGESDGSTEETDESET) is disordered. Residues 318 to 331 (ESDGSTEETDESET) show a composition bias toward acidic residues. Serine 319 carries the post-translational modification Phosphoserine.

The protein belongs to the CSTPP1 family. In terms of assembly, interacts with PCM1. Interacts with TTLL1, TPGS1, TPGS2 and LRRC49; the interactions link CSTPP1 to the complex TPGC. Binds to alpha-tubulin.

Its subcellular location is the cytoplasm. It localises to the cytoskeleton. The protein resides in the microtubule organizing center. It is found in the centrosome. The protein localises to the centriolar satellite. In terms of biological role, regulator of the tubulin polyglutamylase complex (TPGC) that controls cytoskeletal organization, nuclear shape, and cilium disassembly by balancing microtubule and actin assembly. Regulates the assembly and stability of the TPGC and thereby modulates polyglutamylation of the microtubule, which antagonizes MAP4 binding. In Macaca fascicularis (Crab-eating macaque), this protein is Centriolar satellite-associated tubulin polyglutamylase complex regulator 1 (CSTPP1).